Reading from the N-terminus, the 511-residue chain is 2-isopropylmalate synthase (511 aa).

Residues 5–267 form the Pyruvate carboxyltransferase domain; the sequence is LFIFDTTLRD…DTRIDATQIV (263 aa). Mn(2+) is bound by residues aspartate 14, histidine 202, histidine 204, and asparagine 238. Positions 393–511 are regulatory domain; the sequence is KLLSMKVCSE…SKRERAHPQV (119 aa).

Belongs to the alpha-IPM synthase/homocitrate synthase family. LeuA type 1 subfamily. In terms of assembly, homodimer. The cofactor is Mn(2+).

It localises to the cytoplasm. It catalyses the reaction 3-methyl-2-oxobutanoate + acetyl-CoA + H2O = (2S)-2-isopropylmalate + CoA + H(+). Its pathway is amino-acid biosynthesis; L-leucine biosynthesis; L-leucine from 3-methyl-2-oxobutanoate: step 1/4. Catalyzes the condensation of the acetyl group of acetyl-CoA with 3-methyl-2-oxobutanoate (2-ketoisovalerate) to form 3-carboxy-3-hydroxy-4-methylpentanoate (2-isopropylmalate). The sequence is that of 2-isopropylmalate synthase from Thiobacillus denitrificans (strain ATCC 25259 / T1).